A 499-amino-acid polypeptide reads, in one-letter code: UTP--glucose-1-phosphate uridylyltransferase (499 aa).

Residue Ser-2 is modified to N-acetylserine. A Phosphoserine modification is found at Ser-17. Thr-19 bears the Phosphothreonine mark. Residues Ser-21 and Ser-79 each carry the phosphoserine modification. UTP-binding positions include 109 to 112 (LNGG), Lys-123, Gln-186, and Gly-215. 111-112 (GG) is a binding site for substrate. Lys-123 serves as a coordination point for Mg(2+). Substrate-binding positions include His-216 and 244 to 246 (NGD). Asp-246 is a UTP binding site. A Mg(2+)-binding site is contributed by Asp-246. Omega-N-methylarginine is present on Arg-369. Lys-388 contributes to the UTP binding site. Lys-388 is a catalytic residue. The segment at 448–499 (HLTITGNVFLGKDVTLRGTVIIVCSDGHKIDIPNGSILENVVVTGNLQILEH) is oligomerization.

The protein belongs to the UDPGP type 1 family. Homooctamer.

It catalyses the reaction alpha-D-glucose 1-phosphate + UTP + H(+) = UDP-alpha-D-glucose + diphosphate. Its function is as follows. Plays a central role as a glucosyl donor in cellular metabolic pathways. This Saccharomyces cerevisiae (strain ATCC 204508 / S288c) (Baker's yeast) protein is UTP--glucose-1-phosphate uridylyltransferase.